The following is a 116-amino-acid chain: Nucleoid-associated protein SACE_0254 (116 aa).

Residues 90-116 (LQQEKMGPVTGALGGGQGLGGLGLPGL) form a disordered region. The span at 101–116 (ALGGGQGLGGLGLPGL) shows a compositional bias: gly residues.

Belongs to the YbaB/EbfC family. Homodimer.

The protein localises to the cytoplasm. Its subcellular location is the nucleoid. Its function is as follows. Binds to DNA and alters its conformation. May be involved in regulation of gene expression, nucleoid organization and DNA protection. The polypeptide is Nucleoid-associated protein SACE_0254 (Saccharopolyspora erythraea (strain ATCC 11635 / DSM 40517 / JCM 4748 / NBRC 13426 / NCIMB 8594 / NRRL 2338)).